We begin with the raw amino-acid sequence, 436 residues long: Histidinol dehydrogenase (436 aa).

Positions 240, 262, and 265 each coordinate substrate. Zn(2+)-binding residues include glutamine 262 and histidine 265. Catalysis depends on proton acceptor residues glutamate 331 and histidine 332. Residues histidine 332, aspartate 365, glutamate 419, and histidine 424 each coordinate substrate. Position 365 (aspartate 365) interacts with Zn(2+). Histidine 424 lines the Zn(2+) pocket.

This sequence belongs to the histidinol dehydrogenase family. The cofactor is Zn(2+).

The catalysed reaction is L-histidinol + 2 NAD(+) + H2O = L-histidine + 2 NADH + 3 H(+). The protein operates within amino-acid biosynthesis; L-histidine biosynthesis; L-histidine from 5-phospho-alpha-D-ribose 1-diphosphate: step 9/9. In terms of biological role, catalyzes the sequential NAD-dependent oxidations of L-histidinol to L-histidinaldehyde and then to L-histidine. The polypeptide is Histidinol dehydrogenase (Leifsonia xyli subsp. xyli (strain CTCB07)).